A 103-amino-acid chain; its full sequence is Matrix Gla protein (103 aa).

The signal sequence occupies residues 1–19; the sequence is MKSLILLAILAALAVVTLC. E21 is modified (4-carboxyglutamate). Residues S22, S25, and S28 each carry the phosphoserine modification. The Gla domain maps to 51–97; sequence RAKVQERIRERSKPVHELNREACDDYRLCERYAMVYGYNAAYNRYFR. E56, E60, E67, and E71 each carry 4-carboxyglutamate. A disulfide bridge links C73 with C79. Residues 97–103 constitute a propeptide, removed in mature form; probably by carboxypeptidase N; it reads RKRRGTK.

Belongs to the osteocalcin/matrix Gla protein family. In terms of processing, requires vitamin K-dependent gamma-carboxylation for its function.

The protein localises to the secreted. Functionally, associates with the organic matrix of bone and cartilage. Thought to act as an inhibitor of bone formation. The polypeptide is Matrix Gla protein (MGP) (Homo sapiens (Human)).